The chain runs to 646 residues: UvrABC system protein C (646 aa).

The region spanning Val16 to Val95 is the GIY-YIG domain. The region spanning Asp208–Ala243 is the UVR domain.

Belongs to the UvrC family. As to quaternary structure, interacts with UvrB in an incision complex.

The protein resides in the cytoplasm. In terms of biological role, the UvrABC repair system catalyzes the recognition and processing of DNA lesions. UvrC both incises the 5' and 3' sides of the lesion. The N-terminal half is responsible for the 3' incision and the C-terminal half is responsible for the 5' incision. The sequence is that of UvrABC system protein C from Mycobacterium bovis (strain BCG / Pasteur 1173P2).